The primary structure comprises 403 residues: Keratin, type I cytoskeletal 19 (403 aa).

The tract at residues 1–82 (MTSYSYRQSS…TVTDGLLGGN (82 aa)) is head. Residue Arg7 is modified to Omega-N-methylarginine. Residue Ser14 is modified to Phosphoserine. Position 24 is an asymmetric dimethylarginine; alternate (Arg24). An Omega-N-methylarginine; alternate modification is found at Arg24. The residue at position 27 (Ser27) is a Phosphoserine. Arg32 is subject to Omega-N-methylarginine. Phosphoserine is present on residues Ser35 and Ser40. Residues Arg43 and Arg51 each carry the omega-N-methylarginine modification. Phosphoserine is present on residues Ser57 and Ser67. The coil 1A stretch occupies residues 83-118 (EKITMQNLNDRLASYLDKVRALEQANGELEVKIRDW). The 312-residue stretch at 83 to 394 (EKITMQNLND…SLLEGQEAHY (312 aa)) folds into the IF rod domain. The tract at residues 119–136 (YQKQGPGPFRDYSQYFKT) is linker 1. Positions 137–228 (IEDLRDKILG…KNHEEEISAL (92 aa)) are coil 1B. The interval 229 to 251 (RSQVGGQVSVEVDSTPGIDLAKI) is linker 12. The segment at 247–393 (DLAKILSEMR…RSLLEGQEAH (147 aa)) is necessary for interaction with PNN. The tract at residues 252-390 (LSEMRSQYEA…ATYRSLLEGQ (139 aa)) is coil 2. Residue Thr326 is modified to Phosphothreonine. A rod-like helical tail region spans residues 391-403 (EAHYNSLSIAKAL). Position 394 is a phosphotyrosine (Tyr394). Ser398 bears the Phosphoserine mark.

Belongs to the intermediate filament family. In terms of assembly, heterotetramer of two type I and two type II keratins. Interacts with PNN. Interacts with the actin-binding domain of DMD. Expressed in brain, heart, skin and in costameres of myoplasm at the sarcolemmal membrane in skeletal and cardiac muscle fibers. Undifferentiated gonads and somatic cells of ovarian cords throughout the fetal ovary development.

Involved in the organization of myofibers. Together with KRT8, helps to link the contractile apparatus to dystrophin at the costameres of striated muscle. In Rattus norvegicus (Rat), this protein is Keratin, type I cytoskeletal 19 (Krt19).